The following is a 186-amino-acid chain: Peptide deformylase (186 aa).

2 residues coordinate Fe cation: Cys-113 and His-156. Residue Glu-157 is part of the active site. His-160 is a Fe cation binding site.

The protein belongs to the polypeptide deformylase family. The cofactor is Fe(2+).

The enzyme catalyses N-terminal N-formyl-L-methionyl-[peptide] + H2O = N-terminal L-methionyl-[peptide] + formate. Its function is as follows. Removes the formyl group from the N-terminal Met of newly synthesized proteins. Requires at least a dipeptide for an efficient rate of reaction. N-terminal L-methionine is a prerequisite for activity but the enzyme has broad specificity at other positions. This is Peptide deformylase from Ligilactobacillus salivarius (strain UCC118) (Lactobacillus salivarius).